The primary structure comprises 244 residues: Cell division protein ZipA (244 aa).

The Periplasmic segment spans residues 1–4 (MSDM). Residues 5–25 (AMIRIGILIAGLLLVAAIFLF) traverse the membrane as a helical segment. The Cytoplasmic portion of the chain corresponds to 26-244 (GRPKKSPQGR…APPLTKSPRW (219 aa)). The tract at residues 30-91 (KSPQGRRVDK…GAGGNDVGKR (62 aa)) is disordered. The segment covering 35-50 (RRVDKDDTQPRERREP) has biased composition (basic and acidic residues).

Belongs to the ZipA family. As to quaternary structure, interacts with FtsZ via their C-terminal domains.

The protein localises to the cell inner membrane. Functionally, essential cell division protein that stabilizes the FtsZ protofilaments by cross-linking them and that serves as a cytoplasmic membrane anchor for the Z ring. Also required for the recruitment to the septal ring of downstream cell division proteins. This Xanthomonas campestris pv. campestris (strain ATCC 33913 / DSM 3586 / NCPPB 528 / LMG 568 / P 25) protein is Cell division protein ZipA.